A 208-amino-acid chain; its full sequence is 3-isopropylmalate dehydratase small subunit (208 aa).

The protein belongs to the LeuD family. LeuD type 1 subfamily. Heterodimer of LeuC and LeuD.

It carries out the reaction (2R,3S)-3-isopropylmalate = (2S)-2-isopropylmalate. It participates in amino-acid biosynthesis; L-leucine biosynthesis; L-leucine from 3-methyl-2-oxobutanoate: step 2/4. Its function is as follows. Catalyzes the isomerization between 2-isopropylmalate and 3-isopropylmalate, via the formation of 2-isopropylmaleate. This Granulibacter bethesdensis (strain ATCC BAA-1260 / CGDNIH1) protein is 3-isopropylmalate dehydratase small subunit.